A 470-amino-acid chain; its full sequence is Putative multidrug resistance protein MdtD (470 aa).

At M1–Q11 the chain is on the periplasmic side. The helical transmembrane segment at L12–A32 threads the bilayer. Residues L33 to H48 lie on the Cytoplasmic side of the membrane. A helical transmembrane segment spans residues M49 to A69. Topologically, residues D70–N76 are periplasmic. The helical transmembrane segment at I77 to T97 threads the bilayer. Residues L98 to L101 lie on the Cytoplasmic side of the membrane. The helical transmembrane segment at V102–M124 threads the bilayer. Residues K125 to T137 lie on the Periplasmic side of the membrane. A helical membrane pass occupies residues F138–V158. The Cytoplasmic segment spans residues E159–H164. Residues W165 to M185 traverse the membrane as a helical segment. At P186–D196 the chain is on the periplasmic side. Residues L197 to S217 form a helical membrane-spanning segment. Residues K218–P224 are Cytoplasmic-facing. Residues W225–A245 form a helical membrane-spanning segment. Over K246 to T262 the chain is Periplasmic. Residues F263–M283 traverse the membrane as a helical segment. At T284 to P285 the chain is on the cytoplasmic side. A helical transmembrane segment spans residues V286–M306. Residues V307–S341 are Periplasmic-facing. A helical membrane pass occupies residues L342–L362. Residues Q363–S395 lie on the Cytoplasmic side of the membrane. Residues M396–F416 traverse the membrane as a helical segment. Residues G417–H430 lie on the Periplasmic side of the membrane. A helical transmembrane segment spans residues V431–A451. Over R452–L470 the chain is Cytoplasmic.

It belongs to the major facilitator superfamily. TCR/Tet family.

The protein localises to the cell inner membrane. This chain is Putative multidrug resistance protein MdtD, found in Salmonella typhi.